Consider the following 275-residue polypeptide: Large ribosomal subunit protein uL2 (275 aa).

A compositionally biased stretch (polar residues) spans 35 to 49 (DSQSSTAGRNNNGRI). 2 disordered regions span residues 35–59 (DSQS…GGHK) and 224–275 (AMNP…RHKR). Residues 50–59 (TTRHKGGGHK) are compositionally biased toward basic residues.

Belongs to the universal ribosomal protein uL2 family. Part of the 50S ribosomal subunit. Forms a bridge to the 30S subunit in the 70S ribosome.

Its function is as follows. One of the primary rRNA binding proteins. Required for association of the 30S and 50S subunits to form the 70S ribosome, for tRNA binding and peptide bond formation. It has been suggested to have peptidyltransferase activity; this is somewhat controversial. Makes several contacts with the 16S rRNA in the 70S ribosome. The polypeptide is Large ribosomal subunit protein uL2 (Burkholderia cenocepacia (strain HI2424)).